The following is a 238-amino-acid chain: uncharacterized protein (238 aa).

Residues 1 to 20 (MPNLHSLPLGTRPENAIRNN) form a disordered region.

The protein belongs to the PEP2 family.

This is an uncharacterized protein from Emericella nidulans (strain FGSC A4 / ATCC 38163 / CBS 112.46 / NRRL 194 / M139) (Aspergillus nidulans).